The sequence spans 294 residues: ATP synthase gamma chain (294 aa).

Belongs to the ATPase gamma chain family. F-type ATPases have 2 components, CF(1) - the catalytic core - and CF(0) - the membrane proton channel. CF(1) has five subunits: alpha(3), beta(3), gamma(1), delta(1), epsilon(1). CF(0) has three main subunits: a, b and c.

The protein localises to the cell membrane. In terms of biological role, produces ATP from ADP in the presence of a proton gradient across the membrane. The gamma chain is believed to be important in regulating ATPase activity and the flow of protons through the CF(0) complex. In Ruminiclostridium cellulolyticum (strain ATCC 35319 / DSM 5812 / JCM 6584 / H10) (Clostridium cellulolyticum), this protein is ATP synthase gamma chain.